The primary structure comprises 222 residues: Adenylate kinase (222 aa).

S2 is a propeptide (removed in mature form). 2 positions are modified to N-acetylserine: S2 and S3. 16–21 (GAGKGT) contacts ATP. Residues 36 to 65 (ATGDMLRSQIAKGTQLGLEAKKIMDQGGLV) are NMP. Residues T37, R42, 63 to 65 (GLV), 92 to 95 (GFPR), and Q99 contribute to the AMP site. The interval 133 to 170 (GRLIHPASGRSYHKIFNPPKEDMKDDVTGEALVQRSDD) is LID. Residues R134 and 143 to 144 (SY) each bind ATP. Residues R167 and R178 each coordinate AMP. Q206 provides a ligand contact to ATP.

It belongs to the adenylate kinase family. AK2 subfamily. In terms of assembly, monomer.

Its subcellular location is the cytoplasm. The protein resides in the cytosol. It localises to the mitochondrion intermembrane space. It catalyses the reaction AMP + ATP = 2 ADP. Catalyzes the reversible transfer of the terminal phosphate group between ATP and AMP. Plays an important role in cellular energy homeostasis and in adenine nucleotide metabolism. Adenylate kinase activity is critical for regulation of the phosphate utilization and the AMP de novo biosynthesis pathways. This chain is Adenylate kinase, found in Saccharomyces cerevisiae (strain YJM789) (Baker's yeast).